Reading from the N-terminus, the 103-residue chain is RNA-binding protein Hfq (103 aa).

One can recognise a Sm domain in the interval 9 to 68 (DPFLNALRRERVPVSIYLVNGIKLQGQIESFDQFVILLKNTVSQMVYKHAISTVVPSRPV). The tract at residues 63–103 (VPSRPVSHHSNNAGGGTGSNFHHGSNAQGSSAPAQDSDETE) is disordered. A compositionally biased stretch (polar residues) spans 81-96 (SNFHHGSNAQGSSAPA).

This sequence belongs to the Hfq family. As to quaternary structure, homohexamer.

Functionally, RNA chaperone that binds small regulatory RNA (sRNAs) and mRNAs to facilitate mRNA translational regulation in response to envelope stress, environmental stress and changes in metabolite concentrations. Also binds with high specificity to tRNAs. The polypeptide is RNA-binding protein Hfq (Enterobacter sp. (strain 638)).